Reading from the N-terminus, the 335-residue chain is DNA-directed RNA polymerase subunit alpha (335 aa).

The segment at 1-233 is alpha N-terminal domain (alpha-NTD); that stretch reads MTRTANEFLT…QQIAIFVDLQ (233 aa). Positions 247–335 are alpha C-terminal domain (alpha-CTD); that stretch reads VDPILLRPVD…MDDRFAYRSR (89 aa).

It belongs to the RNA polymerase alpha chain family. As to quaternary structure, homodimer. The RNAP catalytic core consists of 2 alpha, 1 beta, 1 beta' and 1 omega subunit. When a sigma factor is associated with the core the holoenzyme is formed, which can initiate transcription.

The enzyme catalyses RNA(n) + a ribonucleoside 5'-triphosphate = RNA(n+1) + diphosphate. In terms of biological role, DNA-dependent RNA polymerase catalyzes the transcription of DNA into RNA using the four ribonucleoside triphosphates as substrates. In Acinetobacter baumannii (strain AB307-0294), this protein is DNA-directed RNA polymerase subunit alpha.